We begin with the raw amino-acid sequence, 209 residues long: Ribosomal RNA small subunit methyltransferase G (209 aa).

S-adenosyl-L-methionine is bound by residues Gly71, Phe76, 122-123 (AE), and Arg135.

Belongs to the methyltransferase superfamily. RNA methyltransferase RsmG family.

The protein resides in the cytoplasm. In terms of biological role, specifically methylates the N7 position of a guanine in 16S rRNA. The sequence is that of Ribosomal RNA small subunit methyltransferase G from Flavobacterium johnsoniae (strain ATCC 17061 / DSM 2064 / JCM 8514 / BCRC 14874 / CCUG 350202 / NBRC 14942 / NCIMB 11054 / UW101) (Cytophaga johnsonae).